The chain runs to 612 residues: UvrABC system protein C (612 aa).

Residues 20 to 98 enclose the GIY-YIG domain; the sequence is THSGVYRMLD…IKQHRPKYNI (79 aa). Residues 208–243 form the UVR domain; sequence SSVLEEISAKMYQASEDMEYEKAQVYRDQLVILRKL.

The protein belongs to the UvrC family. In terms of assembly, interacts with UvrB in an incision complex.

Its subcellular location is the cytoplasm. In terms of biological role, the UvrABC repair system catalyzes the recognition and processing of DNA lesions. UvrC both incises the 5' and 3' sides of the lesion. The N-terminal half is responsible for the 3' incision and the C-terminal half is responsible for the 5' incision. In Francisella philomiragia subsp. philomiragia (strain ATCC 25017 / CCUG 19701 / FSC 153 / O#319-036), this protein is UvrABC system protein C.